Here is a 453-residue protein sequence, read N- to C-terminus: Midnolin (453 aa).

The Ubiquitin-like domain maps to 20 to 94; sequence MNLNIQSTTG…LTLLPSVEAG (75 aa). Disordered regions lie at residues 185 to 219, 231 to 256, 330 to 374, and 390 to 434; these read HLAS…TTSV, PCAE…RSRK, SQAR…QTEN, and QKRL…IDFE. Composition is skewed to low complexity over residues 188-204 and 239-252; these read SCTP…PTAS and SSRG…SASS. The span at 330–362 shows a compositional bias: polar residues; it reads SQARNPKATSPQSSEPQQTTHPVGHCQAQTRTC. Residues 365–374 show a composition bias toward basic and acidic residues; it reads SGDRLRQTEN. Over residues 390–399 the composition is skewed to basic residues; it reads QKRLRRKARR. Positions 415–428 are enriched in low complexity; it reads RTSSNSSTSSGEGS.

Its subcellular location is the nucleus. The protein resides in the cytoplasm. The protein localises to the cytosol. It localises to the nucleolus. Its function is as follows. Facilitates ubiquitin-independent proteasomal degradation of polycomb protein CBX4. Plays a role in inhibiting the activity of glucokinase GCK and both glucose-induced and basal insulin secretion. This Xenopus tropicalis (Western clawed frog) protein is Midnolin (midn).